The primary structure comprises 142 residues: Hemoglobin subunit alpha-A (142 aa).

Positions 2 to 142 (VLSAADKNNV…VGTVLTAKYR (141 aa)) constitute a Globin domain. An O2-binding site is contributed by His59. Residue His88 participates in heme b binding.

This sequence belongs to the globin family. In terms of assembly, heterotetramer of two alpha chains and two beta chains. Red blood cells.

Functionally, involved in oxygen transport from the lung to the various peripheral tissues. This is Hemoglobin subunit alpha-A (HBAA) from Meleagris gallopavo (Wild turkey).